The sequence spans 284 residues: Bifunctional protein FolD 2 (284 aa).

NADP(+) is bound by residues 164 to 166, Ser189, and Ile230; that span reads GRG.

Belongs to the tetrahydrofolate dehydrogenase/cyclohydrolase family. In terms of assembly, homodimer.

It carries out the reaction (6R)-5,10-methylene-5,6,7,8-tetrahydrofolate + NADP(+) = (6R)-5,10-methenyltetrahydrofolate + NADPH. The enzyme catalyses (6R)-5,10-methenyltetrahydrofolate + H2O = (6R)-10-formyltetrahydrofolate + H(+). It participates in one-carbon metabolism; tetrahydrofolate interconversion. In terms of biological role, catalyzes the oxidation of 5,10-methylenetetrahydrofolate to 5,10-methenyltetrahydrofolate and then the hydrolysis of 5,10-methenyltetrahydrofolate to 10-formyltetrahydrofolate. This Desulfitobacterium hafniense (strain Y51) protein is Bifunctional protein FolD 2.